The primary structure comprises 511 residues: Bifunctional purine biosynthesis protein PurH (511 aa).

Residues 1-147 (MIQIKRALIS…KNYKHTLVLT (147 aa)) enclose the MGS-like domain.

This sequence belongs to the PurH family.

The enzyme catalyses (6R)-10-formyltetrahydrofolate + 5-amino-1-(5-phospho-beta-D-ribosyl)imidazole-4-carboxamide = 5-formamido-1-(5-phospho-D-ribosyl)imidazole-4-carboxamide + (6S)-5,6,7,8-tetrahydrofolate. The catalysed reaction is IMP + H2O = 5-formamido-1-(5-phospho-D-ribosyl)imidazole-4-carboxamide. The protein operates within purine metabolism; IMP biosynthesis via de novo pathway; 5-formamido-1-(5-phospho-D-ribosyl)imidazole-4-carboxamide from 5-amino-1-(5-phospho-D-ribosyl)imidazole-4-carboxamide (10-formyl THF route): step 1/1. It functions in the pathway purine metabolism; IMP biosynthesis via de novo pathway; IMP from 5-formamido-1-(5-phospho-D-ribosyl)imidazole-4-carboxamide: step 1/1. In Leptospira interrogans serogroup Icterohaemorrhagiae serovar Lai (strain 56601), this protein is Bifunctional purine biosynthesis protein PurH.